The chain runs to 311 residues: Retinol dehydrogenase 8 (311 aa).

An NADP(+)-binding site is contributed by L9 to G18. 3 consecutive transmembrane segments (helical) span residues V86–A106, I137–A157, and L169–V189. S142 serves as a coordination point for substrate. The active-site Proton acceptor is the Y155.

Belongs to the short-chain dehydrogenases/reductases (SDR) family. As to expression, detected in photoreceptor outer segments in the retina (at protein level).

The protein localises to the membrane. It catalyses the reaction all-trans-retinol + NADP(+) = all-trans-retinal + NADPH + H(+). Retinol dehydrogenase with a clear preference for NADP. Converts all-trans-retinal to all-trans-retinol. May play a role in the regeneration of visual pigment at high light intensity. This chain is Retinol dehydrogenase 8 (RDH8), found in Homo sapiens (Human).